The primary structure comprises 161 residues: Regulator of ribonuclease activity A (161 aa).

This sequence belongs to the RraA family. As to quaternary structure, homotrimer. Binds to both RNA-binding sites in the C-terminal region of Rne and to RhlB.

It is found in the cytoplasm. Its function is as follows. Globally modulates RNA abundance by binding to RNase E (Rne) and regulating its endonucleolytic activity. Can modulate Rne action in a substrate-dependent manner by altering the composition of the degradosome. Modulates RNA-binding and helicase activities of the degradosome. In Shigella boydii serotype 18 (strain CDC 3083-94 / BS512), this protein is Regulator of ribonuclease activity A.